Consider the following 143-residue polypeptide: Large ribosomal subunit protein uL15 (143 aa).

Residues 1-45 form a disordered region; that stretch reads MLLNTVQPGVGAKHAKRRVGRGIGSGLGKTCGRGHKGQKSRAGGF. Gly residues predominate over residues 21 to 31; the sequence is RGIGSGLGKTC.

Belongs to the universal ribosomal protein uL15 family. As to quaternary structure, part of the 50S ribosomal subunit.

Binds to the 23S rRNA. This Chromobacterium violaceum (strain ATCC 12472 / DSM 30191 / JCM 1249 / CCUG 213 / NBRC 12614 / NCIMB 9131 / NCTC 9757 / MK) protein is Large ribosomal subunit protein uL15.